The following is a 159-amino-acid chain: NADH-quinone oxidoreductase subunit B (159 aa).

[4Fe-4S] cluster-binding residues include cysteine 36, cysteine 37, cysteine 102, and cysteine 132.

The protein belongs to the complex I 20 kDa subunit family. NDH-1 is composed of 14 different subunits. Subunits NuoB, C, D, E, F, and G constitute the peripheral sector of the complex. It depends on [4Fe-4S] cluster as a cofactor.

Its subcellular location is the cell inner membrane. The enzyme catalyses a quinone + NADH + 5 H(+)(in) = a quinol + NAD(+) + 4 H(+)(out). Functionally, NDH-1 shuttles electrons from NADH, via FMN and iron-sulfur (Fe-S) centers, to quinones in the respiratory chain. Couples the redox reaction to proton translocation (for every two electrons transferred, four hydrogen ions are translocated across the cytoplasmic membrane), and thus conserves the redox energy in a proton gradient. This chain is NADH-quinone oxidoreductase subunit B, found in Verminephrobacter eiseniae (strain EF01-2).